The sequence spans 589 residues: ATP-dependent lipid A-core flippase (589 aa).

5 helical membrane passes run 23–43, 60–80, 153–173, 249–269, and 272–292; these read WPIF…DAGF, LVFI…RGAA, VGLL…FLVI, VGTS…LFFA, and PSFH…IMML. Residues 27 to 307 form the ABC transmembrane type-1 domain; sequence LIGVVGMIAV…LTMVNSYIQK (281 aa). The ABC transporter domain maps to 339-575; that stretch reads IEYQGVSFAY…NGAYAELYRM (237 aa). 373–380 contributes to the ATP binding site; sequence GRSGAGKS.

Belongs to the ABC transporter superfamily. Lipid exporter (TC 3.A.1.106) family. As to quaternary structure, homodimer.

The protein localises to the cell inner membrane. It carries out the reaction ATP + H2O + lipid A-core oligosaccharideSide 1 = ADP + phosphate + lipid A-core oligosaccharideSide 2.. Functionally, involved in lipopolysaccharide (LPS) biosynthesis. Translocates lipid A-core from the inner to the outer leaflet of the inner membrane. Transmembrane domains (TMD) form a pore in the inner membrane and the ATP-binding domain (NBD) is responsible for energy generation. In Coxiella burnetii (strain RSA 493 / Nine Mile phase I), this protein is ATP-dependent lipid A-core flippase.